The following is a 438-amino-acid chain: Glutaryl-CoA dehydrogenase, mitochondrial (438 aa).

A mitochondrion-targeting transit peptide spans 1-44 (MALRGVSVRLLSRGPGLHVLRTWVSSAAQTEKGGRTQSQLAKSS). Residues 138–139 (RS) and S186 each bind substrate. FAD is bound by residues 177–186 (FGLTEPNSGS) and 212–214 (WIT). Residue K240 is modified to N6-acetyllysine. A substrate-binding site is contributed by 287–294 (FGCLNNAR). FAD contacts are provided by residues R319, Q330, and 387–391 (DMLGG). The active-site Proton acceptor is E414. G415 lines the substrate pocket. Residues 416 to 418 (THD) and F434 contribute to the FAD site.

It belongs to the acyl-CoA dehydrogenase family. As to quaternary structure, homotetramer. Requires FAD as cofactor. In terms of tissue distribution, isoform Long and isoform Short are expressed in fibroblasts and liver.

The protein localises to the mitochondrion matrix. It catalyses the reaction glutaryl-CoA + oxidized [electron-transfer flavoprotein] + 2 H(+) = (2E)-butenoyl-CoA + reduced [electron-transfer flavoprotein] + CO2. It participates in amino-acid metabolism; lysine degradation. Its pathway is amino-acid metabolism; tryptophan metabolism. Strongly inhibited by MCPA-CoA, a metabolite of hypoglycin which is present in unripened fruit of the ackee tree. Catalyzes the oxidative decarboxylation of glutaryl-CoA to crotonyl-CoA and CO(2) in the degradative pathway of L-lysine, L-hydroxylysine, and L-tryptophan metabolism. It uses electron transfer flavoprotein as its electron acceptor. Isoform Short is inactive. The polypeptide is Glutaryl-CoA dehydrogenase, mitochondrial (GCDH) (Homo sapiens (Human)).